A 224-amino-acid polypeptide reads, in one-letter code: Urease accessory protein UreF (224 aa).

This sequence belongs to the UreF family. In terms of assembly, ureD, UreF and UreG form a complex that acts as a GTP-hydrolysis-dependent molecular chaperone, activating the urease apoprotein by helping to assemble the nickel containing metallocenter of UreC. The UreE protein probably delivers the nickel.

It is found in the cytoplasm. In terms of biological role, required for maturation of urease via the functional incorporation of the urease nickel metallocenter. This is Urease accessory protein UreF from Pseudomonas fluorescens (strain ATCC BAA-477 / NRRL B-23932 / Pf-5).